The following is a 367-amino-acid chain: MNAVQKKIKVLCVDDSALIRSLMTEIINSQPDMEVCATAPDPLVARELIKQHNPDVLTLDVEMPRMDGLDFLEKLMRLRPMPVVMVSSLTERGSEITLRALELGAVDFVTKPRVGIRDGMLDYSEKLADKVRAASRARVRQNPQPHAAAAAAAHGHAGAAAPLINNPLVSTEKLIIVGASTGGTEAIREVLTPLPPDAPAVLIAQHMPPGFTRSFAQRLNGLCRISVKEAEHGERVLPGHAYIAPGHAHLLLARSGANYIAHLSDEPPVNRHRPSVDVLFRSAAQHAGKNALGVILTGMGRDGAAGLLEMKKAGAYTFAQDEASCVVFGMPREAIAMGGVDDVAPLSDMSRRIMARLASMGDRVQRV.

The Response regulatory domain occupies 9-126; it reads KVLCVDDSAL…RDGMLDYSEK (118 aa). The residue at position 60 (D60) is a 4-aspartylphosphate. The CheB-type methylesterase domain occupies 168–360; that stretch reads LVSTEKLIIV…RRIMARLASM (193 aa). Catalysis depends on residues S180, H206, and D302.

The protein belongs to the CheB family. Post-translationally, phosphorylated by CheA. Phosphorylation of the N-terminal regulatory domain activates the methylesterase activity.

The protein localises to the cytoplasm. It catalyses the reaction [protein]-L-glutamate 5-O-methyl ester + H2O = L-glutamyl-[protein] + methanol + H(+). The enzyme catalyses L-glutaminyl-[protein] + H2O = L-glutamyl-[protein] + NH4(+). Its function is as follows. Involved in chemotaxis. Part of a chemotaxis signal transduction system that modulates chemotaxis in response to various stimuli. Catalyzes the demethylation of specific methylglutamate residues introduced into the chemoreceptors (methyl-accepting chemotaxis proteins or MCP) by CheR. Also mediates the irreversible deamidation of specific glutamine residues to glutamic acid. This chain is Protein-glutamate methylesterase/protein-glutamine glutaminase 1, found in Burkholderia pseudomallei (strain K96243).